The chain runs to 133 residues: Small ribosomal subunit protein uS8 (133 aa).

The protein belongs to the universal ribosomal protein uS8 family. Part of the 30S ribosomal subunit. Contacts proteins S5 and S12.

Functionally, one of the primary rRNA binding proteins, it binds directly to 16S rRNA central domain where it helps coordinate assembly of the platform of the 30S subunit. The chain is Small ribosomal subunit protein uS8 from Acaryochloris marina (strain MBIC 11017).